A 274-amino-acid polypeptide reads, in one-letter code: Formamidopyrimidine-DNA glycosylase (274 aa).

Pro-2 acts as the Schiff-base intermediate with DNA in catalysis. Glu-3 functions as the Proton donor in the catalytic mechanism. Lys-58 (proton donor; for beta-elimination activity) is an active-site residue. Residues His-91, Arg-110, and Lys-152 each coordinate DNA. An FPG-type zinc finger spans residues 237–271; the sequence is KVYGRKNLPCLVCENKIETVVIAGRHSAFCPHCQP. Arg-261 acts as the Proton donor; for delta-elimination activity in catalysis.

This sequence belongs to the FPG family. As to quaternary structure, monomer. It depends on Zn(2+) as a cofactor.

It carries out the reaction Hydrolysis of DNA containing ring-opened 7-methylguanine residues, releasing 2,6-diamino-4-hydroxy-5-(N-methyl)formamidopyrimidine.. The enzyme catalyses 2'-deoxyribonucleotide-(2'-deoxyribose 5'-phosphate)-2'-deoxyribonucleotide-DNA = a 3'-end 2'-deoxyribonucleotide-(2,3-dehydro-2,3-deoxyribose 5'-phosphate)-DNA + a 5'-end 5'-phospho-2'-deoxyribonucleoside-DNA + H(+). Involved in base excision repair of DNA damaged by oxidation or by mutagenic agents. Acts as a DNA glycosylase that recognizes and removes damaged bases. Has a preference for oxidized purines, such as 7,8-dihydro-8-oxoguanine (8-oxoG). Has AP (apurinic/apyrimidinic) lyase activity and introduces nicks in the DNA strand. Cleaves the DNA backbone by beta-delta elimination to generate a single-strand break at the site of the removed base with both 3'- and 5'-phosphates. The sequence is that of Formamidopyrimidine-DNA glycosylase from Legionella pneumophila (strain Lens).